The sequence spans 191 residues: 3-isopropylmalate dehydratase small subunit (191 aa).

This sequence belongs to the LeuD family. LeuD type 1 subfamily. In terms of assembly, heterodimer of LeuC and LeuD.

It carries out the reaction (2R,3S)-3-isopropylmalate = (2S)-2-isopropylmalate. It participates in amino-acid biosynthesis; L-leucine biosynthesis; L-leucine from 3-methyl-2-oxobutanoate: step 2/4. Functionally, catalyzes the isomerization between 2-isopropylmalate and 3-isopropylmalate, via the formation of 2-isopropylmaleate. In Lactococcus lactis subsp. cremoris (strain MG1363), this protein is 3-isopropylmalate dehydratase small subunit.